The sequence spans 320 residues: Cytochrome f (320 aa).

Positions 1 to 35 (MQTRNAFSWIKKEITRSISVLLMIYIITRAPISNA) are cleaved as a signal peptide. Heme contacts are provided by Tyr36, Cys56, Cys59, and His60. Residues 286 to 305 (VQGLLLFLASIILAQILLVL) traverse the membrane as a helical segment.

It belongs to the cytochrome f family. The 4 large subunits of the cytochrome b6-f complex are cytochrome b6, subunit IV (17 kDa polypeptide, petD), cytochrome f and the Rieske protein, while the 4 small subunits are PetG, PetL, PetM and PetN. The complex functions as a dimer. Requires heme as cofactor.

It localises to the plastid. Its subcellular location is the chloroplast thylakoid membrane. Functionally, component of the cytochrome b6-f complex, which mediates electron transfer between photosystem II (PSII) and photosystem I (PSI), cyclic electron flow around PSI, and state transitions. The sequence is that of Cytochrome f (petA) from Pisum sativum (Garden pea).